A 161-amino-acid chain; its full sequence is Mediator of RNA polymerase II transcription subunit 10 (161 aa).

This sequence belongs to the Mediator complex subunit 10 family. As to quaternary structure, component of the Mediator complex.

The protein localises to the nucleus. Component of the Mediator complex, a coactivator involved in the regulated transcription of nearly all RNA polymerase II-dependent genes. Mediator functions as a bridge to convey information from gene-specific regulatory proteins to the basal RNA polymerase II transcription machinery. Mediator is recruited to promoters by direct interactions with regulatory proteins and serves as a scaffold for the assembly of a functional preinitiation complex with RNA polymerase II and the general transcription factors. The chain is Mediator of RNA polymerase II transcription subunit 10 (NUT2) from Kluyveromyces lactis (strain ATCC 8585 / CBS 2359 / DSM 70799 / NBRC 1267 / NRRL Y-1140 / WM37) (Yeast).